We begin with the raw amino-acid sequence, 1578 residues long: Bromodomain-containing protein DDB_G0270170 (1578 aa).

Over residues 1 to 12 the composition is skewed to acidic residues; that stretch reads MSLEQQDETVVE. Disordered regions lie at residues 1-39, 108-127, 151-285, and 319-454; these read MSLE…TYKE, NNNN…NNTE, HYSD…AKEL, and NENI…TTQT. Low complexity predominate over residues 18 to 35; the sequence is SFETNNSTANNTNNNTDN. Positions 152 to 163 are enriched in basic and acidic residues; it reads YSDDESSKEKQD. Composition is skewed to low complexity over residues 164–185 and 197–231; these read NINS…SENI and TTPS…TTTN. Composition is skewed to polar residues over residues 319-332 and 340-351; these read NENI…STTK and TASTTNTPIITA. The span at 352-383 shows a compositional bias: low complexity; it reads QQNTTPLSPTQTTTTTTTPTTTTAQQNTPAQT. Positions 384–395 are enriched in polar residues; that stretch reads ESKPPTTISINI. Composition is skewed to low complexity over residues 396–407 and 417–433; these read KGSKSPKTTGGK and VVIS…VATT. Over residues 443 to 454 the composition is skewed to polar residues; that stretch reads STANNNSETTQT. Residues 479–506 are a coiled coil; sequence SDSATIQQLQQSISMLEDKIRLISSNNK. Disordered stretches follow at residues 543 to 565 and 580 to 730; these read FTKS…YSDD and IPIP…RMGK. Composition is skewed to low complexity over residues 604 to 653 and 660 to 686; these read NTST…PPQQ and TQQE…DTTT. The Bromo domain occupies 735–841; it reads VVLTPVFKRC…DVFEKGFPKV (107 aa). Residues 851 to 903 are a coiled coil; the sequence is KNVDQEKIEKLSNDLKNVTKELEKFKKDDSNSINNNNNNNNNYNNNNNNNNNN. Disordered stretches follow at residues 874-969, 1039-1167, 1184-1452, and 1480-1544; these read KFKK…KVTT, HALP…NNNN, SIPE…TDSA, and EREE…KGNM. Composition is skewed to low complexity over residues 881-911, 918-961, and 1047-1061; these read NSIN…SSRS, SSGS…SSNN, and SSTH…DSSS. One can recognise an NET domain in the interval 957–1039; that stretch reads SSSNNKKYPK…QYKNGEIPQH (83 aa). The segment covering 1064-1077 has biased composition (basic and acidic residues); it reads REIEKLQKQLDRLG. The segment covering 1092 to 1107 has biased composition (basic residues); the sequence is HSKRISKPISKARGRK. Low complexity predominate over residues 1112–1167; sequence SSSNLNNSSNNINNNNNNINNYNNNNNYNNNNNNNLNNNNNNNINSNLNNNLNNNN. A coiled-coil region spans residues 1113-1150; sequence SSNLNNSSNNINNNNNNINNYNNNNNYNNNNNNNLNNN. The span at 1192-1204 shows a compositional bias: acidic residues; sequence TDISESSDSESDS. Low complexity-rich tracts occupy residues 1205–1218 and 1231–1334; these read ESGS…YSDS and YNNS…SLTN. Positions 1280-1308 form a coiled coil; it reads NSNNNNSNNNNNNVNNNNNNHNNNNHNNN. Residues 1356-1369 are compositionally biased toward polar residues; it reads SVASWSFDPTNNKE. Residues 1370–1386 are compositionally biased toward low complexity; sequence SSSSSSTSSTSSTSNTT. Residues 1387-1399 are compositionally biased toward polar residues; the sequence is LTPIIQQSSLTHA. Composition is skewed to low complexity over residues 1400 to 1424 and 1432 to 1451; these read SSPI…NNLS and NSPS…NTDS. Positions 1462–1544 form a coiled coil; it reads TLKQKEKERV…EKLNNSKGNM (83 aa). A compositionally biased stretch (basic and acidic residues) spans 1480–1538; the sequence is EREEKEEELKKEEEKKRIEMEEIKRLAKEKEEREAEETRKQIESERAAAREAREKEKLN.

The sequence is that of Bromodomain-containing protein DDB_G0270170 from Dictyostelium discoideum (Social amoeba).